The following is a 252-amino-acid chain: Ribosomal RNA small subunit methyltransferase J (252 aa).

S-adenosyl-L-methionine is bound by residues 104–105 (RD), 120–121 (ER), and Asp174.

It belongs to the methyltransferase superfamily. RsmJ family.

It localises to the cytoplasm. It catalyses the reaction guanosine(1516) in 16S rRNA + S-adenosyl-L-methionine = N(2)-methylguanosine(1516) in 16S rRNA + S-adenosyl-L-homocysteine + H(+). In terms of biological role, specifically methylates the guanosine in position 1516 of 16S rRNA. The sequence is that of Ribosomal RNA small subunit methyltransferase J from Mannheimia succiniciproducens (strain KCTC 0769BP / MBEL55E).